Consider the following 360-residue polypeptide: Histidinol-phosphate aminotransferase (360 aa).

An N6-(pyridoxal phosphate)lysine modification is found at Lys213.

Belongs to the class-II pyridoxal-phosphate-dependent aminotransferase family. Histidinol-phosphate aminotransferase subfamily. In terms of assembly, homodimer. Pyridoxal 5'-phosphate serves as cofactor.

It catalyses the reaction L-histidinol phosphate + 2-oxoglutarate = 3-(imidazol-4-yl)-2-oxopropyl phosphate + L-glutamate. It participates in amino-acid biosynthesis; L-histidine biosynthesis; L-histidine from 5-phospho-alpha-D-ribose 1-diphosphate: step 7/9. The sequence is that of Histidinol-phosphate aminotransferase from Baumannia cicadellinicola subsp. Homalodisca coagulata.